The primary structure comprises 302 residues: Succinate--CoA ligase [ADP-forming] subunit alpha (302 aa).

CoA contacts are provided by residues 17 to 20 (TGST), lysine 43, and 96 to 98 (ITE). Tyrosine 159 is a substrate binding site. The active-site Tele-phosphohistidine intermediate is histidine 247.

The protein belongs to the succinate/malate CoA ligase alpha subunit family. In terms of assembly, heterotetramer of two alpha and two beta subunits.

The catalysed reaction is succinate + ATP + CoA = succinyl-CoA + ADP + phosphate. It carries out the reaction GTP + succinate + CoA = succinyl-CoA + GDP + phosphate. It participates in carbohydrate metabolism; tricarboxylic acid cycle; succinate from succinyl-CoA (ligase route): step 1/1. Succinyl-CoA synthetase functions in the citric acid cycle (TCA), coupling the hydrolysis of succinyl-CoA to the synthesis of either ATP or GTP and thus represents the only step of substrate-level phosphorylation in the TCA. The alpha subunit of the enzyme binds the substrates coenzyme A and phosphate, while succinate binding and nucleotide specificity is provided by the beta subunit. The protein is Succinate--CoA ligase [ADP-forming] subunit alpha of Staphylococcus epidermidis (strain ATCC 35984 / DSM 28319 / BCRC 17069 / CCUG 31568 / BM 3577 / RP62A).